Consider the following 278-residue polypeptide: Tryptophan synthase alpha chain (278 aa).

Active-site proton acceptor residues include E49 and D60.

It belongs to the TrpA family. In terms of assembly, tetramer of two alpha and two beta chains.

The enzyme catalyses (1S,2R)-1-C-(indol-3-yl)glycerol 3-phosphate + L-serine = D-glyceraldehyde 3-phosphate + L-tryptophan + H2O. It participates in amino-acid biosynthesis; L-tryptophan biosynthesis; L-tryptophan from chorismate: step 5/5. Its function is as follows. The alpha subunit is responsible for the aldol cleavage of indoleglycerol phosphate to indole and glyceraldehyde 3-phosphate. The sequence is that of Tryptophan synthase alpha chain from Corynebacterium diphtheriae (strain ATCC 700971 / NCTC 13129 / Biotype gravis).